Reading from the N-terminus, the 143-residue chain is Hemoglobin subunit alpha-2 (143 aa).

Serine 2 bears the N-acetylserine mark. One can recognise a Globin domain in the interval 2 to 143 (SLSSKQKATV…LALALAEKYR (142 aa)). An O2-binding site is contributed by histidine 60. Histidine 89 is a binding site for heme b.

Belongs to the globin family. In terms of assembly, hb 2 is a heterotetramer of two alpha-2 and two beta-2 chains. As to expression, red blood cells.

Functionally, involved in oxygen transport from gills to the various peripheral tissues. This chain is Hemoglobin subunit alpha-2 (hba2), found in Gadus morhua (Atlantic cod).